A 110-amino-acid polypeptide reads, in one-letter code: Secreted Ly-6/uPAR-related protein 1 (110 aa).

A signal peptide spans 1 to 22 (MTLRWAMWLLLLAAWSMGYGEA). Residues 24–73 (RCYTCEQPTAINSCKNIAQCKMEDTACKTVLETVEAAFPFNHSPMVTRSC) enclose the UPAR/Ly6 domain. 5 disulfides stabilise this stretch: cysteine 25–cysteine 50, cysteine 28–cysteine 37, cysteine 43–cysteine 73, cysteine 77–cysteine 93, and cysteine 94–cysteine 99.

In terms of assembly, homodimer. Interacts with PLAU. Interacts with CHRNA7. Expressed in skin, eye, whole lung, trachea, esophagus and stomach. Widely expressed in various tissues including spleen and thymus but not pancreas. Expressed in macrophages, dendritic cells, T and B cells. Expressed in lung specifically in ciliated bronchial epithelial cells (at protein level). Expression is decreased in lungs of asthmatic model mice. Expressed in the cornea.

Its subcellular location is the secreted. Functionally, has an antitumor activity. Was found to be a marker of late differentiation of the skin. Implicated in maintaining the physiological and structural integrity of the keratinocyte layers of the skin. In vitro down-regulates keratinocyte proliferation; the function may involve the proposed role as modulator of nicotinic acetylcholine receptors (nAChRs) activity. In vitro inhibits alpha-7-dependent nAChR currents in an allosteric manner. In T cells may be involved in regulation of intracellular Ca(2+) signaling. Seems to have a immunomodulatory function in the cornea. The function may implicate a possible role as a scavenger receptor for PLAU thereby blocking PLAU-dependent functions of PLAUR such as in cell migration and proliferation. In Mus musculus (Mouse), this protein is Secreted Ly-6/uPAR-related protein 1 (Slurp1).